The sequence spans 285 residues: Ribosomal RNA small subunit methyltransferase A (285 aa).

Asparagine 21, leucine 23, glycine 48, glutamate 69, aspartate 94, and asparagine 127 together coordinate S-adenosyl-L-methionine.

It belongs to the class I-like SAM-binding methyltransferase superfamily. rRNA adenine N(6)-methyltransferase family. RsmA subfamily.

The protein localises to the cytoplasm. The enzyme catalyses adenosine(1518)/adenosine(1519) in 16S rRNA + 4 S-adenosyl-L-methionine = N(6)-dimethyladenosine(1518)/N(6)-dimethyladenosine(1519) in 16S rRNA + 4 S-adenosyl-L-homocysteine + 4 H(+). Functionally, specifically dimethylates two adjacent adenosines (A1518 and A1519) in the loop of a conserved hairpin near the 3'-end of 16S rRNA in the 30S particle. May play a critical role in biogenesis of 30S subunits. In Koribacter versatilis (strain Ellin345), this protein is Ribosomal RNA small subunit methyltransferase A.